The primary structure comprises 678 residues: DNA mismatch repair protein MutL (678 aa).

It belongs to the DNA mismatch repair MutL/HexB family.

This protein is involved in the repair of mismatches in DNA. It is required for dam-dependent methyl-directed DNA mismatch repair. May act as a 'molecular matchmaker', a protein that promotes the formation of a stable complex between two or more DNA-binding proteins in an ATP-dependent manner without itself being part of a final effector complex. This is DNA mismatch repair protein MutL from Lactiplantibacillus plantarum (strain ATCC BAA-793 / NCIMB 8826 / WCFS1) (Lactobacillus plantarum).